The chain runs to 369 residues: 4-hydroxy-3-methylbut-2-en-1-yl diphosphate synthase (flavodoxin) (369 aa).

[4Fe-4S] cluster-binding residues include cysteine 270, cysteine 273, cysteine 305, and glutamate 312.

This sequence belongs to the IspG family. It depends on [4Fe-4S] cluster as a cofactor.

The catalysed reaction is (2E)-4-hydroxy-3-methylbut-2-enyl diphosphate + oxidized [flavodoxin] + H2O + 2 H(+) = 2-C-methyl-D-erythritol 2,4-cyclic diphosphate + reduced [flavodoxin]. It functions in the pathway isoprenoid biosynthesis; isopentenyl diphosphate biosynthesis via DXP pathway; isopentenyl diphosphate from 1-deoxy-D-xylulose 5-phosphate: step 5/6. Converts 2C-methyl-D-erythritol 2,4-cyclodiphosphate (ME-2,4cPP) into 1-hydroxy-2-methyl-2-(E)-butenyl 4-diphosphate. The polypeptide is 4-hydroxy-3-methylbut-2-en-1-yl diphosphate synthase (flavodoxin) (Pseudomonas putida (strain ATCC 700007 / DSM 6899 / JCM 31910 / BCRC 17059 / LMG 24140 / F1)).